The primary structure comprises 523 residues: Sialate O-acetylesterase (523 aa).

The first 23 residues, 1 to 23, serve as a signal peptide directing secretion; the sequence is MVAPGLVLGLVLPLILWADRSAG. Residues Asn-107, Asn-138, Asn-267, Asn-290, Asn-401, and Asn-422 are each glycosylated (N-linked (GlcNAc...) asparagine).

Its subcellular location is the lysosome. The enzyme catalyses N-acetyl-9-O-acetylneuraminate + H2O = N-acetylneuraminate + acetate + H(+). The catalysed reaction is an Ac-O-9-sialoglycoconjugate + H2O = a sialoglycoconjugate + acetate + H(+). Functionally, catalyzes the removal of O-acetyl ester groups from position 9 of the free diacetylated sialate N-acetyl-9-O-acetylneuraminate (Neu5,9Ac2) in the cytosol and of the diacetylated sialate residues of sialylglycoconjugates in the lysosomes. Together with the sialate-O-acetyltransferase they regulate the balance of acetylated sialoglycoconjugates, key players in various processes such as cell-cell interactions, host-pathogen recognition, and tumor antigenicity. The sequence is that of Sialate O-acetylesterase (SIAE) from Pongo abelii (Sumatran orangutan).